A 612-amino-acid chain; its full sequence is Peroxisomal carnitine O-octanoyltransferase (612 aa).

Methionine 1 bears the N-acetylmethionine mark. 2 positions are modified to N6-succinyllysine: lysine 40 and lysine 57. Histidine 327 functions as the Proton acceptor in the catalytic mechanism. Residues lysine 406 and 410–417 each bind CoA; that span reads KNKMLHPD. Lysine 406 carries the post-translational modification N6-acetyllysine; alternate. At lysine 406 the chain carries N6-succinyllysine; alternate. Residues tyrosine 439, threonine 441, and threonine 452 each coordinate (R)-carnitine. The Microbody targeting signal motif lies at 610 to 612; it reads THL.

The protein belongs to the carnitine/choline acetyltransferase family. Monomer.

It is found in the peroxisome. It catalyses the reaction octanoyl-CoA + (R)-carnitine = O-octanoyl-(R)-carnitine + CoA. The enzyme catalyses 4,8-dimethylnonanoyl-CoA + (R)-carnitine = O-4,8-dimethylnonanoyl-(R)-carnitine + CoA. It functions in the pathway lipid metabolism; fatty acid beta-oxidation. Functionally, beta-oxidation of fatty acids. The highest activity concerns the C6 to C10 chain length substrate. Converts the end product of pristanic acid beta oxidation, 4,8-dimethylnonanoyl-CoA, to its corresponding carnitine ester. This is Peroxisomal carnitine O-octanoyltransferase (CROT) from Homo sapiens (Human).